The primary structure comprises 557 residues: Phosphoacetylglucosamine mutase (557 aa).

The active-site Phosphoserine intermediate is the serine 67. Serine 67, aspartate 298, aspartate 300, and aspartate 302 together coordinate Mg(2+). Position 67 is a phosphoserine (serine 67). Residues 395 to 397 (EAN), 522 to 526 (RASGT), and arginine 531 contribute to the substrate site.

The protein belongs to the phosphohexose mutase family. Mg(2+) is required as a cofactor.

It localises to the cytoplasm. The protein resides in the nucleus. It catalyses the reaction N-acetyl-alpha-D-glucosamine 1-phosphate = N-acetyl-D-glucosamine 6-phosphate. It functions in the pathway nucleotide-sugar biosynthesis; UDP-N-acetyl-alpha-D-glucosamine biosynthesis; N-acetyl-alpha-D-glucosamine 1-phosphate from alpha-D-glucosamine 6-phosphate (route I): step 2/2. Functionally, catalyzes the conversion of GlcNAc-6-P into GlcNAc-1-P during the synthesis of uridine diphosphate/UDP-GlcNAc, which is a biosynthetic precursor of chitin and also supplies the amino sugars for N-linked oligosaccharides of glycoproteins. Also has phosphoglucomutase activity. In Saccharomyces cerevisiae (strain ATCC 204508 / S288c) (Baker's yeast), this protein is Phosphoacetylglucosamine mutase.